The primary structure comprises 120 residues: Large ribosomal subunit protein uL18 (120 aa).

Belongs to the universal ribosomal protein uL18 family. Part of the 50S ribosomal subunit; part of the 5S rRNA/L5/L18/L25 subcomplex. Contacts the 5S and 23S rRNAs.

Functionally, this is one of the proteins that bind and probably mediate the attachment of the 5S RNA into the large ribosomal subunit, where it forms part of the central protuberance. The sequence is that of Large ribosomal subunit protein uL18 from Methylobacterium sp. (strain 4-46).